A 240-amino-acid chain; its full sequence is 7-cyano-7-deazaguanine synthase (240 aa).

18-28 serves as a coordination point for ATP; it reads FSGGQDSTTCL. Positions 197, 206, 209, and 212 each coordinate Zn(2+).

This sequence belongs to the QueC family. Requires Zn(2+) as cofactor.

The enzyme catalyses 7-carboxy-7-deazaguanine + NH4(+) + ATP = 7-cyano-7-deazaguanine + ADP + phosphate + H2O + H(+). It participates in purine metabolism; 7-cyano-7-deazaguanine biosynthesis. Catalyzes the ATP-dependent conversion of 7-carboxy-7-deazaguanine (CDG) to 7-cyano-7-deazaguanine (preQ(0)). The chain is 7-cyano-7-deazaguanine synthase from Shewanella putrefaciens (strain CN-32 / ATCC BAA-453).